We begin with the raw amino-acid sequence, 305 residues long: tRNA pseudouridine synthase B (305 aa).

Residue Asp-48 is the Nucleophile of the active site.

This sequence belongs to the pseudouridine synthase TruB family. Type 1 subfamily.

It carries out the reaction uridine(55) in tRNA = pseudouridine(55) in tRNA. Functionally, responsible for synthesis of pseudouridine from uracil-55 in the psi GC loop of transfer RNAs. The chain is tRNA pseudouridine synthase B from Pseudomonas putida (strain GB-1).